The primary structure comprises 272 residues: tRNA uridine(34) hydroxylase (272 aa).

Residues 121-217 (SRSDVYTIDT…YFKSTGNINN (97 aa)) enclose the Rhodanese domain. The active-site Cysteine persulfide intermediate is the cysteine 177.

Belongs to the TrhO family.

The enzyme catalyses uridine(34) in tRNA + AH2 + O2 = 5-hydroxyuridine(34) in tRNA + A + H2O. In terms of biological role, catalyzes oxygen-dependent 5-hydroxyuridine (ho5U) modification at position 34 in tRNAs. The polypeptide is tRNA uridine(34) hydroxylase (Ehrlichia ruminantium (strain Welgevonden)).